We begin with the raw amino-acid sequence, 103 residues long: c-Myc-binding protein (103 aa).

It belongs to the AMY1 family. As to quaternary structure, binds via its C-terminal region to the N-terminal region of MYC. Associates with AKAP1/S-AKAP84. Interacts with MYCBPAP. Interacts with CFAP91. In terms of tissue distribution, highly expressed in heart, placenta, pancreas, skeletal muscle and kidney. Also present at low levels in lung.

Its subcellular location is the cytoplasm. It localises to the nucleus. The protein localises to the mitochondrion. May control the transcriptional activity of MYC. Stimulates the activation of E box-dependent transcription by MYC. This Homo sapiens (Human) protein is c-Myc-binding protein.